Consider the following 617-residue polypeptide: Type IV inositol polyphosphate 5-phosphatase 6 (617 aa).

2 disordered regions span residues 30–62 (EFQADDPSSAGIEVEHRSSFSAEKAPSTIKNTK) and 241–330 (DFDP…VLYS). Low complexity predominate over residues 242 to 253 (FDPSFRGSSSSH). Basic and acidic residues predominate over residues 254–290 (RPSDYSRRPSDYSRRPSDYSRRPSDYSRRPSDSRPSD). A compositionally biased stretch (low complexity) spans 291 to 311 (YSRPSDYYSRPSDYSRPSDFS). Catalytic stretches follow at residues 458-473 (DRVIWLGDLNYRIALS) and 538-553 (KRRTPAWCDRILWFGE).

This sequence belongs to the inositol polyphosphate 5-phosphatase family. As to expression, broadly expressed in emerging organs. Mostly localized in procambium of growing organs. Restricted to vascular differentiating cells of young organs.

It catalyses the reaction a 1,2-diacyl-sn-glycero-3-phospho-(1D-myo-inositol-4,5-bisphosphate) + H2O = a 1,2-diacyl-sn-glycero-3-phospho-(1D-myo-inositol 4-phosphate) + phosphate. It carries out the reaction a 1,2-diacyl-sn-glycero-3-phospho-(1D-myo-inositol-3,4,5-trisphosphate) + H2O = a 1,2-diacyl-sn-glycero-3-phospho-(1D-myo-inositol-3,4-bisphosphate) + phosphate. In terms of biological role, has phosphatase activity toward PtdIns(4,5)P2 and PtdIns(3,4,5)P3. Required for the patterning of procambium and during the differentiation of vascular tissues. Acts before the acquisition of preprocambial identity. Seems to be also involved in the abscisic acid (ABA) signaling pathway. Acts redundantly with CVL1 for maintaining vascular continuity. Regulates phosphoinositide-dependent VAN3 localization. The protein is Type IV inositol polyphosphate 5-phosphatase 6 of Arabidopsis thaliana (Mouse-ear cress).